We begin with the raw amino-acid sequence, 141 residues long: Large ribosomal subunit protein uL16 (141 aa).

The segment covering 1 to 17 (MLQPKRTKYRKVQKGKM) has biased composition (basic residues). A disordered region spans residues 1–29 (MLQPKRTKYRKVQKGKMKGNSQRGHELSN).

It belongs to the universal ribosomal protein uL16 family. As to quaternary structure, part of the 50S ribosomal subunit.

Functionally, binds 23S rRNA and is also seen to make contacts with the A and possibly P site tRNAs. In Flavobacterium psychrophilum (strain ATCC 49511 / DSM 21280 / CIP 103535 / JIP02/86), this protein is Large ribosomal subunit protein uL16.